The sequence spans 116 residues: MAGLLKKTTGLVGLAVCDTPHERLTILYTKTLDILKHFPKHAAYRKYTEQITNEKLDMVKAEPDVKKLEALLQGGEVEEVILQAEKELSLARKMLKWKPWEPLVEEPPANQWKWPI.

An N-acetylalanine modification is found at A2. N6-acetyllysine is present on residues K30, K36, K46, and K60. Phosphoserine is present on S89. K98 carries the N6-acetyllysine; alternate modification. At K98 the chain carries N6-succinyllysine; alternate.

Belongs to the complex I NDUFA5 subunit family. As to quaternary structure, complex I is composed of 45 different subunits. In terms of processing, acetylation of Lys-98 is observed in liver mitochondria from fasted mice but not from fed mice.

It localises to the mitochondrion inner membrane. In terms of biological role, accessory subunit of the mitochondrial membrane respiratory chain NADH dehydrogenase (Complex I), that is believed not to be involved in catalysis. Complex I functions in the transfer of electrons from NADH to the respiratory chain. The immediate electron acceptor for the enzyme is believed to be ubiquinone. This is NADH dehydrogenase [ubiquinone] 1 alpha subcomplex subunit 5 (Ndufa5) from Mus musculus (Mouse).